A 119-amino-acid polypeptide reads, in one-letter code: Flagellar transcriptional regulator FlhD (119 aa).

The protein belongs to the FlhD family. In terms of assembly, homodimer; disulfide-linked. Forms a heterohexamer composed of two FlhC and four FlhD subunits. Each FlhC binds a FlhD dimer, forming a heterotrimer, and a hexamer assembles by dimerization of two heterotrimers.

It localises to the cytoplasm. Functionally, functions in complex with FlhC as a master transcriptional regulator that regulates transcription of several flagellar and non-flagellar operons by binding to their promoter region. Activates expression of class 2 flagellar genes, including fliA, which is a flagellum-specific sigma factor that turns on the class 3 genes. Also regulates genes whose products function in a variety of physiological pathways. The sequence is that of Flagellar transcriptional regulator FlhD from Yersinia enterocolitica.